The chain runs to 90 residues: Probable Fe(2+)-trafficking protein (90 aa).

It belongs to the Fe(2+)-trafficking protein family.

Functionally, could be a mediator in iron transactions between iron acquisition and iron-requiring processes, such as synthesis and/or repair of Fe-S clusters in biosynthetic enzymes. This Chromobacterium violaceum (strain ATCC 12472 / DSM 30191 / JCM 1249 / CCUG 213 / NBRC 12614 / NCIMB 9131 / NCTC 9757 / MK) protein is Probable Fe(2+)-trafficking protein.